Here is a 754-residue protein sequence, read N- to C-terminus: MASQEMFPELGQSPAPGVKSRGVSRSPHPHQQQQQQQHQQHQGQFTGTVTGLDLDSSIATASSFANSSFDPNSNNVSPSAESYGYTAAGYLSGTPASQTDQNYANSLQIPQSYGTGLVPQFNESRGLPIQQQSQQQHHQQPSLDDNFSDLLNSNATEYDFNTVYQTHSPSSNTAPEYDSSLLLDPQVHQQSHPTQIPSSHSSTSPQISPLEQQQHSSPGPMSTQGSTTVAYYTPQHSRHASLDPATAAFLTSNTHPDWQAVMGNSAAFQGHRRAPSEVSEISSAAPSPYLSQHESFDGVDNNPSPLLAPQNDPSLYDSALGIENFTLSEQHQQHQGFSPAHSPYISPRLMPQQGQEMMPNVPYLSGPAPNTQYPTPPNDMYGNGAEGMMNMSQGTHPSVDIGQASQMAPPSINVEFAPPSRIPSFGPSKPASNLDSLSPPPSSTRSRGRSKSDPYAHPSTSRLRSSSTSSSLDPLAPTTPRSLSPFDSFGRQQQSNPSSRDPSPSRSNRRLSTSSIDSRNYILGLADPQRPGASPNDSKRVQKHPATFQCNLCPKRFTRAYNLRSHLRTHTDERPFVCTVCGKAFARQHDRKRHEGLHSGEKKFVCQGELSRGGQWGCGRRFARADALGRHFRSEAGRICIKPLLDEESQERERSLMDQQQHHLQPLPQQVMVPVDNPHAGNFVLPAALLAQYPALQTLQWDQIAASADDPSDIGGRSSFDASSGNEFGFEDDDSGLSSVSGINAGYSAAGNFY.

Disordered regions lie at residues 1–51 (MASQ…TVTG), 63–150 (SFAN…FSDL), 187–227 (VHQQ…QGST), 269–299 (QGHR…FDGV), and 384–543 (GAEG…RVQK). Residues 30–44 (HQQQQQQQHQQHQGQ) are compositionally biased toward low complexity. Composition is skewed to polar residues over residues 63 to 80 (SFAN…SPSA) and 94 to 114 (TPAS…QSYG). Low complexity predominate over residues 130–140 (QQQSQQQHHQQ). Polar residues predominate over residues 141 to 150 (PSLDDNFSDL). A compositionally biased stretch (low complexity) spans 189–209 (QQSHPTQIPSSHSSTSPQISP). 2 stretches are compositionally biased toward polar residues: residues 210–227 (LEQQ…QGST) and 279–293 (SEIS…LSQH). Composition is skewed to low complexity over residues 459-472 (STSR…SSSL) and 491-515 (RQQQ…STSS). 2 C2H2-type zinc fingers span residues 548–570 (FQCN…LRTH) and 576–598 (FVCT…EGLH). The C2H2-type 3; degenerate zinc-finger motif lies at 604–635 (FVCQGELSRGGQWGCGRRFARADALGRHFRSE). The interval 708 to 737 (ADDPSDIGGRSSFDASSGNEFGFEDDDSGL) is disordered.

It is found in the nucleus. Its subcellular location is the cytoplasm. Transcription factor involved in the regulation of calcium ion homeostasis. Regulates genes encoding calcium transporters, transcription factors and genes that could be directly or indirectly involved in calcium metabolism. Supports especially pmcA, pmcB and pmcC expression encoding for calcium-translocating P-type ATPases. Binds target promoters at motif A[GT][CG]CA[AC][AG]. Plays an essential role germination, radial growth, and asexual development. Also plays a major role in proper chitin and glucan incorporation into the cell wall. Involved in the high-osmolarity glycerol response (HOG) signaling pathway. Required for pathogenicity in an experimental murine model of invasive pulmonary aspergillosis. This is C2H2 finger domain transcription factor crzA from Aspergillus fumigatus (strain ATCC MYA-4609 / CBS 101355 / FGSC A1100 / Af293) (Neosartorya fumigata).